Reading from the N-terminus, the 349-residue chain is SUMO-activating enzyme subunit 1 (349 aa).

Methionine 1 bears the N-acetylmethionine mark. Residue valine 2 is modified to N-acetylvaline; in SUMO-activating enzyme subunit 1, N-terminally processed. Serine 15 carries the phosphoserine modification. Position 201 is an N6-acetyllysine (lysine 201).

Belongs to the ubiquitin-activating E1 family. In terms of assembly, heterodimer of SAE1 and UBA2/SAE2. The heterodimer corresponds to the two domains that are encoded on a single polypeptide chain in ubiquitin-activating enzyme E1. Interacts with UBE2I.

It localises to the nucleus. Its pathway is protein modification; protein sumoylation. The heterodimer acts as an E1 ligase for SUMO1, SUMO2, SUMO3, and probably SUMO4. It mediates ATP-dependent activation of SUMO proteins followed by formation of a thioester bond between a SUMO protein and a conserved active site cysteine residue on UBA2/SAE2. The protein is SUMO-activating enzyme subunit 1 (Sae1) of Rattus norvegicus (Rat).